The following is a 328-amino-acid chain: Malate dehydrogenase (328 aa).

Position 12-18 (12-18 (GAAGQIG)) interacts with NAD(+). Arg95 and Arg101 together coordinate substrate. Residues Asn108, Gln115, and 132 to 134 (VGN) each bind NAD(+). Substrate is bound by residues Asn134 and Arg165. His190 acts as the Proton acceptor in catalysis.

The protein belongs to the LDH/MDH superfamily. MDH type 2 family.

It carries out the reaction (S)-malate + NAD(+) = oxaloacetate + NADH + H(+). Catalyzes the reversible oxidation of malate to oxaloacetate. This is Malate dehydrogenase from Methylibium petroleiphilum (strain ATCC BAA-1232 / LMG 22953 / PM1).